The following is a 160-amino-acid chain: MSRRHAAEKRVILPDMKYNSILLSRFINNIMKEGKKALAEKIVYSAFNKIEKKHRVDPYQAFNNAMHNVKPHLEVTSVRVGGANYQVPTHVDERRGYALASRWIINAASKRSEKMMIDKLAEELFEASNNRGVAIKKKEDTHKMAEANKAFSHFSPKKMK.

The protein belongs to the universal ribosomal protein uS7 family. As to quaternary structure, part of the 30S ribosomal subunit. Contacts proteins S9 and S11.

Its function is as follows. One of the primary rRNA binding proteins, it binds directly to 16S rRNA where it nucleates assembly of the head domain of the 30S subunit. Is located at the subunit interface close to the decoding center, probably blocks exit of the E-site tRNA. The protein is Small ribosomal subunit protein uS7 of Rickettsia rickettsii (strain Iowa).